Reading from the N-terminus, the 108-residue chain is Small ribosomal subunit protein bS6 (108 aa).

Belongs to the bacterial ribosomal protein bS6 family.

In terms of biological role, binds together with bS18 to 16S ribosomal RNA. The chain is Small ribosomal subunit protein bS6 from Trichormus variabilis (strain ATCC 29413 / PCC 7937) (Anabaena variabilis).